The chain runs to 629 residues: tRNA uridine 5-carboxymethylaminomethyl modification enzyme MnmG (629 aa).

4–9 (GGGHAG) provides a ligand contact to FAD. 268-282 (GPRYCPSIEDKVNRF) provides a ligand contact to NAD(+).

The protein belongs to the MnmG family. Homodimer. Heterotetramer of two MnmE and two MnmG subunits. FAD serves as cofactor.

It localises to the cytoplasm. Its function is as follows. NAD-binding protein involved in the addition of a carboxymethylaminomethyl (cmnm) group at the wobble position (U34) of certain tRNAs, forming tRNA-cmnm(5)s(2)U34. This chain is tRNA uridine 5-carboxymethylaminomethyl modification enzyme MnmG, found in Helicobacter hepaticus (strain ATCC 51449 / 3B1).